We begin with the raw amino-acid sequence, 241 residues long: Ubiquinone biosynthesis O-methyltransferase (241 aa).

Positions 46, 66, 87, and 131 each coordinate S-adenosyl-L-methionine.

The protein belongs to the methyltransferase superfamily. UbiG/COQ3 family.

The enzyme catalyses a 3-demethylubiquinol + S-adenosyl-L-methionine = a ubiquinol + S-adenosyl-L-homocysteine + H(+). The catalysed reaction is a 3-(all-trans-polyprenyl)benzene-1,2-diol + S-adenosyl-L-methionine = a 2-methoxy-6-(all-trans-polyprenyl)phenol + S-adenosyl-L-homocysteine + H(+). Its pathway is cofactor biosynthesis; ubiquinone biosynthesis. O-methyltransferase that catalyzes the 2 O-methylation steps in the ubiquinone biosynthetic pathway. The polypeptide is Ubiquinone biosynthesis O-methyltransferase (Bordetella avium (strain 197N)).